Here is a 305-residue protein sequence, read N- to C-terminus: Probable GTP 3',8-cyclase (305 aa).

Residues 6-233 form the Radical SAM core domain; that stretch reads RHGRPVMSLR…MQDRKKYYID (228 aa). Arg-15 provides a ligand contact to GTP. Residues Cys-22 and Cys-26 each coordinate [4Fe-4S] cluster. Tyr-28 lines the S-adenosyl-L-methionine pocket. Cys-29 provides a ligand contact to [4Fe-4S] cluster. Residue Arg-62 coordinates GTP. Gly-66 contacts S-adenosyl-L-methionine. Residue Thr-92 coordinates GTP. S-adenosyl-L-methionine is bound at residue Ser-116. Lys-153 provides a ligand contact to GTP. Residues Cys-249 and Cys-252 each contribute to the [4Fe-4S] cluster site. 254–256 provides a ligand contact to GTP; that stretch reads RLR. A [4Fe-4S] cluster-binding site is contributed by Cys-266.

Belongs to the radical SAM superfamily. MoaA family. The cofactor is [4Fe-4S] cluster.

The enzyme catalyses GTP + AH2 + S-adenosyl-L-methionine = (8S)-3',8-cyclo-7,8-dihydroguanosine 5'-triphosphate + 5'-deoxyadenosine + L-methionine + A + H(+). Its pathway is cofactor biosynthesis; molybdopterin biosynthesis. Its function is as follows. Catalyzes the cyclization of GTP to (8S)-3',8-cyclo-7,8-dihydroguanosine 5'-triphosphate. The protein is Probable GTP 3',8-cyclase of Methanothermobacter thermautotrophicus (strain ATCC 29096 / DSM 1053 / JCM 10044 / NBRC 100330 / Delta H) (Methanobacterium thermoautotrophicum).